A 792-amino-acid chain; its full sequence is Receptor-like protein 54 (792 aa).

Positions 1 to 21 are cleaved as a signal peptide; sequence MKSNLAVFFITCFFCCVFVTS. The Extracellular segment spans residues 22 to 758; the sequence is DSVYTLPFPF…PKQEHALNWK (737 aa). N-linked (GlcNAc...) asparagine glycans are attached at residues N68 and N107. LRR repeat units follow at residues 114–137, 139–162, 163–187, 189–209, 211–233, 235–258, 259–282, 283–302, 303–324, 325–349, 351–374, and 375–399; these read QHLRYLDLSENHFDSSPIPSGFGR, TYLESLDLSKNGFIGEVPSSISNL, SRLTNLDLSYNKLTGGIPNLHSLTL, ENIDLSYNKFSGAIPSYLFTM, FLVSLNLRQNHLSDPLENINYSA, SKLLILDMAYNLMSHRILEPISKL, ANLIQIDLSFQKTPYTFNFDFLLF, KSLVRLDLSGNSVSVVGTGS, ENLTHLDLSSCNITEFPMFIKD, LQRLWWLDISNNRIKGKVPELLWTL, SMLHVNLSRNSFDSLEGTPKIILN, and SSISELDLSSNAFKGSFPIIPPYVN. N161 is a glycosylation site (N-linked (GlcNAc...) asparagine). The N-linked (GlcNAc...) asparagine glycan is linked to N230. N-linked (GlcNAc...) asparagine glycosylation is found at N304 and N314. Residues N356 and N374 are each glycosylated (N-linked (GlcNAc...) asparagine). Residues 400 to 418 form an LRR 13; degenerate repeat; sequence IMAASNNYFTGGIPLIFCK. LRR repeat units lie at residues 419 to 443, 444 to 470, 472 to 489, and 490 to 515; these read RYRLSLLDLSNNNFSGTIPRCLTNV, SLGLEALKLSNNSLTGRLPDIEDRLVL, DVGHNQISGKLPRSLVNC, and TTLKFLNVEGNHINDTFPFWLKALTR. N-linked (GlcNAc...) asparagine glycans are attached at residues N431, N442, N454, N488, and N503. The LRR 18; degenerate repeat unit spans residues 516–536; it reads LEIIVLRSNRFHGPISSPEVS. LRR repeat units lie at residues 539–563, 614–637, 638–661, 662–685, and 687–709; these read FTALRIIDISRNSFNGSLPQNYFAN, DTYTSIDFSGNSFEGQIPESIGDL, KSLIVLDLSNNSFTGRIPSSLAKL, KQLESLDLSQNRISGNIPQELREL, and FLGYVNMSHNRLTGQIPQSTQVG. N553 and N563 each carry an N-linked (GlcNAc...) asparagine glycan. An N-linked (GlcNAc...) asparagine glycan is attached at N647. N692 is a glycosylation site (N-linked (GlcNAc...) asparagine). The helical transmembrane segment at 759–779 threads the bilayer; it reads AAAIGYGPGVLFGLAIGQAFA. Residues 780–792 lie on the Cytoplasmic side of the membrane; it reads RYKPVLFYKLFRL.

It belongs to the RLP family.

The protein localises to the cell membrane. In Arabidopsis thaliana (Mouse-ear cress), this protein is Receptor-like protein 54.